The chain runs to 261 residues: Probable glutathione-independent glyoxalase hsp3103 (261 aa).

Active-site residues include Cys-162, His-163, and Glu-196.

Belongs to the peptidase C56 family. HSP31-like subfamily.

The catalysed reaction is methylglyoxal + H2O = (R)-lactate + H(+). Functionally, catalyzes the conversion of methylglyoxal (MG) to D-lactate in a single glutathione (GSH)-independent step. May play a role in detoxifying endogenously produced glyoxals. Involved in protection against reactive oxygen species (ROS). This is Probable glutathione-independent glyoxalase hsp3103 from Schizosaccharomyces pombe (strain 972 / ATCC 24843) (Fission yeast).